Reading from the N-terminus, the 269-residue chain is Shikimate dehydrogenase (NADP(+)) (269 aa).

Residues 15–17 (SLS) and Thr62 each bind shikimate. Residue Lys66 is the Proton acceptor of the active site. The shikimate site is built by Asn86 and Asp100. NADP(+) contacts are provided by residues 124–128 (GAGGA), 147–152 (NRTPER), and Ile211. Tyr213 is a shikimate binding site. Gly234 provides a ligand contact to NADP(+).

Belongs to the shikimate dehydrogenase family. In terms of assembly, homodimer.

The enzyme catalyses shikimate + NADP(+) = 3-dehydroshikimate + NADPH + H(+). Its pathway is metabolic intermediate biosynthesis; chorismate biosynthesis; chorismate from D-erythrose 4-phosphate and phosphoenolpyruvate: step 4/7. Involved in the biosynthesis of the chorismate, which leads to the biosynthesis of aromatic amino acids. Catalyzes the reversible NADPH linked reduction of 3-dehydroshikimate (DHSA) to yield shikimate (SA). The sequence is that of Shikimate dehydrogenase (NADP(+)) from Methanococcoides burtonii (strain DSM 6242 / NBRC 107633 / OCM 468 / ACE-M).